Consider the following 497-residue polypeptide: Zinc finger protein ZIC 2-B (497 aa).

Disordered stretches follow at residues 58 to 107 (HMGA…TSQA) and 143 to 180 (SAAA…PQGH). Residues 66 to 88 (PGGGSGGGSGGGGGAGPNGGAGA) show a composition bias toward gly residues. Residues 97–107 (PGQTSAFTSQA) are compositionally biased toward polar residues. Residues 161-171 (LHHHPHHHHQL) are compositionally biased toward basic residues. A C2H2-type 1; atypical zinc finger spans residues 273–308 (LICKWIDPEQLNNPKKSCNKTFSTMHELVTHMSVEH). The C2H2-type 2; atypical zinc finger occupies 317-344 (HICFWEECAREGKPFKAKYKLVNHIRVH). 3 consecutive C2H2-type zinc fingers follow at residues 350 to 374 (FPCP…KRTH), 380 to 404 (FQCE…MHVH), and 410 to 432 (YLCK…MKVH). The tract at residues 423–473 (SSLRKHMKVHESSPQGSESSPAASSGYESSTPPGLVSPNSETQNPNLSPAA) is disordered. A compositionally biased stretch (low complexity) spans 434-452 (SSPQGSESSPAASSGYESS). The span at 459-469 (SPNSETQNPNL) shows a compositional bias: polar residues.

Belongs to the GLI C2H2-type zinc-finger protein family.

The protein localises to the nucleus. It localises to the cytoplasm. Functionally, transcriptional repressor that inhibits neurogenesis and induces neural and neural crest differentiation. Regulates anteroposterior patterning in early development by inhibiting expression of the nodal genes through the inhibition of vegt. Required for gastrulation movements and for proper anterior neural and axial development. May also act as a transcriptional activator. May bind to the minimal GLI-consensus sequence 5'-TGGGTGGTC-3'. This Xenopus laevis (African clawed frog) protein is Zinc finger protein ZIC 2-B (zic2-b).